The sequence spans 257 residues: NAD kinase (257 aa).

The active-site Proton acceptor is the aspartate 46. NAD(+)-binding positions include 46–47 (DG), 116–117 (NE), aspartate 146, alanine 154, and 157–162 (TAYNLS).

The protein belongs to the NAD kinase family. A divalent metal cation serves as cofactor.

It localises to the cytoplasm. It catalyses the reaction NAD(+) + ATP = ADP + NADP(+) + H(+). Functionally, involved in the regulation of the intracellular balance of NAD and NADP, and is a key enzyme in the biosynthesis of NADP. Catalyzes specifically the phosphorylation on 2'-hydroxyl of the adenosine moiety of NAD to yield NADP. The protein is NAD kinase of Mesorhizobium japonicum (strain LMG 29417 / CECT 9101 / MAFF 303099) (Mesorhizobium loti (strain MAFF 303099)).